The following is a 427-amino-acid chain: 3-phosphoshikimate 1-carboxyvinyltransferase (427 aa).

Residues Lys22, Ser23, and Arg27 each coordinate 3-phosphoshikimate. Residue Lys22 coordinates phosphoenolpyruvate. Phosphoenolpyruvate is bound by residues Gly96 and Arg124. 3-phosphoshikimate contacts are provided by Ser169, Ser170, Gln171, Ser197, Asp313, Asn336, and Lys340. Gln171 contributes to the phosphoenolpyruvate binding site. Catalysis depends on Asp313, which acts as the Proton acceptor. Residues Arg344, Arg386, and Lys411 each contribute to the phosphoenolpyruvate site.

Belongs to the EPSP synthase family. Monomer.

The protein localises to the cytoplasm. It catalyses the reaction 3-phosphoshikimate + phosphoenolpyruvate = 5-O-(1-carboxyvinyl)-3-phosphoshikimate + phosphate. It functions in the pathway metabolic intermediate biosynthesis; chorismate biosynthesis; chorismate from D-erythrose 4-phosphate and phosphoenolpyruvate: step 6/7. Functionally, catalyzes the transfer of the enolpyruvyl moiety of phosphoenolpyruvate (PEP) to the 5-hydroxyl of shikimate-3-phosphate (S3P) to produce enolpyruvyl shikimate-3-phosphate and inorganic phosphate. The chain is 3-phosphoshikimate 1-carboxyvinyltransferase from Escherichia coli O1:K1 / APEC.